The chain runs to 161 residues: Arachidonate 5-lipoxygenase-activating protein (161 aa).

Residues 1-8 (MDQEAVGN) are Lumenal-facing. Residues 9 to 30 (VVLLAIVTLISVVQNAFFAHKV) traverse the membrane as a helical segment. Residues 31 to 52 (ELESKAQSGRSFQRTGTLAFER) lie on the Cytoplasmic side of the membrane. A helical transmembrane segment spans residues 53–77 (VYTANQNCVDAYPTFLVVLWTAGLL). Residues 78-80 (CSQ) are Lumenal-facing. Residues 81–102 (VPAAFAGLMYLFVRQKYFVGYL) form a helical membrane-spanning segment. At 103–107 (GERTQ) the chain is on the cytoplasmic side. The stretch at 108–115 (STPGYIFG) is an intramembrane region. The helical transmembrane segment at 116-128 (KRIILFLFLMSLA) threads the bilayer. At 129 to 161 (GILNHYLIFFFGSDFENYIRTITTTISPLLLIP) the chain is on the lumenal side.

This sequence belongs to the MAPEG family. Homotrimer. Interacts with LTC4S and ALOX5.

The protein resides in the nucleus membrane. It is found in the endoplasmic reticulum membrane. In terms of biological role, required for leukotriene biosynthesis by ALOX5 (5-lipoxygenase). Anchors ALOX5 to the membrane. Binds arachidonic acid, and could play an essential role in the transfer of arachidonic acid to ALOX5. Binds to MK-886, a compound that blocks the biosynthesis of leukotrienes. The sequence is that of Arachidonate 5-lipoxygenase-activating protein (Alox5ap) from Rattus norvegicus (Rat).